Here is a 91-residue protein sequence, read N- to C-terminus: Large ribosomal subunit protein bL31 (91 aa).

The interval 62-91 (RRKYSGTKPQQTAKGKKAAPKSTPKTNKKG) is disordered.

The protein belongs to the bacterial ribosomal protein bL31 family. Type A subfamily. Part of the 50S ribosomal subunit.

Functionally, binds the 23S rRNA. The polypeptide is Large ribosomal subunit protein bL31 (Thermosynechococcus vestitus (strain NIES-2133 / IAM M-273 / BP-1)).